The following is a 596-amino-acid chain: Glomulin (596 aa).

Ala2 carries the N-acetylalanine modification. Residues 2–555 form an alpha-helical region with structural similarity to HEAT repeats region; sequence AVEELQSIIK…EEIPSMPPEM (554 aa). The tract at residues 299–596 is important for interaction with RBX1; that stretch reads IDQLPMVLSP…STSEENVGIK (298 aa).

As to quaternary structure, interacts with FKBP4 and FKBP1A. Interacts with RBX1 (via RING domain). Identified in complexes that contain RBX1 plus one of the cullins CUL1, CUL2, CUL3, and CUL4A. Identified in a SCF complex composed of CUL1, RBX1, SKP1, FBXW7 and GLMN. Component of a SCF-like complex consisting of CUL7, RBX1, SKP1, FBXW8 and GLMN. Interacts with unphosphorylated MET and is released upon MET phosphorylation. Post-translationally, phosphorylated on tyrosine residues. Ubiquitous. Detected in embryonic vasculature and embryonic perichondrium, and in adult eye, brain, heart, testis, kidney, smooth muscle and skeletal muscle.

Regulatory component of cullin-RING-based SCF (SKP1-Cullin-F-box protein) E3 ubiquitin-protein ligase complexes. Inhibits E3 ubiquitin ligase activity by binding to the RING domain of RBX1 and inhibiting its interaction with the E2 ubiquitin-conjugating enzyme CDC34. Inhibits RBX1-mediated neddylation of CUL1. Required for normal stability and normal cellular levels of key components of SCF ubiquitin ligase complexes, including FBXW7, RBX1, CUL1, CUL2, CUL3, CUL4A, and thereby contributes to the regulation of CCNE1 and MYC levels. Essential for normal development of the vasculature. Contributes to the regulation of RPS6KB1 phosphorylation. The polypeptide is Glomulin (Glmn) (Mus musculus (Mouse)).